The following is a 321-amino-acid chain: Thioredoxin reductase (321 aa).

An FAD-binding site is contributed by 36-43; sequence TGMEKGGQ. A disulfide bridge links C136 with C139. 287–296 provides a ligand contact to FAD; sequence DVMDHIYRQA.

This sequence belongs to the class-II pyridine nucleotide-disulfide oxidoreductase family. Homodimer. It depends on FAD as a cofactor.

The protein localises to the cytoplasm. The enzyme catalyses [thioredoxin]-dithiol + NADP(+) = [thioredoxin]-disulfide + NADPH + H(+). The chain is Thioredoxin reductase (trxB) from Escherichia coli O157:H7.